Here is a 205-residue protein sequence, read N- to C-terminus: Arginine exporter protein ArgO (205 aa).

6 helical membrane passes run Met-1–Pro-21, Leu-37–Gly-57, Leu-68–Phe-88, Val-112–Val-132, Trp-147–Ala-167, and Ile-182–Gly-202.

Belongs to the LysE/ArgO transporter (TC 2.A.75) family.

It localises to the cell inner membrane. The enzyme catalyses L-arginine(in) = L-arginine(out). Functionally, involved in the export of arginine. Important to control the intracellular level of arginine and the correct balance between arginine and lysine. This is Arginine exporter protein ArgO from Serratia proteamaculans (strain 568).